A 331-amino-acid chain; its full sequence is tRNA uridine(34) hydroxylase (331 aa).

The region spanning 123–217 is the Rhodanese domain; that stretch reads TDPEVLLIDT…YLEDVPQEES (95 aa). C177 serves as the catalytic Cysteine persulfide intermediate. The segment at 293-331 is disordered; sequence KSRGEEHIGSEAAKAIKKRQAEKKLKRKNYHQHLTQGAE. The segment covering 307 to 323 has biased composition (basic residues); sequence AIKKRQAEKKLKRKNYH.

Belongs to the TrhO family.

It carries out the reaction uridine(34) in tRNA + AH2 + O2 = 5-hydroxyuridine(34) in tRNA + A + H2O. In terms of biological role, catalyzes oxygen-dependent 5-hydroxyuridine (ho5U) modification at position 34 in tRNAs. The chain is tRNA uridine(34) hydroxylase from Hahella chejuensis (strain KCTC 2396).